The following is an 877-amino-acid chain: Protein P (877 aa).

The interval 1–183 is terminal protein domain (TP); the sequence is MHPFSQLFRN…GKPYSWGHRQ (183 aa). Positions 184–382 are spacer; the sequence is LEQHNGQQHE…YCLHHIVSSL (199 aa). Residues 185–198 show a composition bias toward basic and acidic residues; the sequence is EQHNGQQHESHLQS. The disordered stretch occupies residues 185–347; it reads EQHNGQQHES…PSSSGLCGGT (163 aa). A compositionally biased stretch (polar residues) spans 233-242; that stretch reads FGESQKSART. Residues 267–281 show a composition bias toward low complexity; the sequence is QQGSSQVSSPRSKSS. 2 stretches are compositionally biased toward polar residues: residues 282–302 and 338–347; these read NFRN…PTWY and PSSSGLCGGT. The interval 383 to 723 is polymerase/reverse transcriptase domain (RT); it reads EDWGPCTISG…YAELWPVARQ (341 aa). In terms of domain architecture, Reverse transcriptase spans 393-634; that stretch reads DVTIRSPRTP…HHLHFMGYVI (242 aa). Residues D465, D585, and D586 each contribute to the Mg(2+) site.

The protein belongs to the hepadnaviridae P protein family.

It catalyses the reaction DNA(n) + a 2'-deoxyribonucleoside 5'-triphosphate = DNA(n+1) + diphosphate. The catalysed reaction is Endonucleolytic cleavage to 5'-phosphomonoester.. Its activity is regulated as follows. Activated by host HSP70 and HSP40 in vitro to be able to bind the epsilon loop of the pgRNA. Because deletion of the RNase H region renders the protein partly chaperone-independent, the chaperones may be needed indirectly to relieve occlusion of the RNA-binding site by this domain. Inhibited by several reverse-transcriptase inhibitors: Lamivudine, Adefovir and Entecavir. Multifunctional enzyme that converts the viral RNA genome into dsDNA in viral cytoplasmic capsids. This enzyme displays a DNA polymerase activity that can copy either DNA or RNA templates, and a ribonuclease H (RNase H) activity that cleaves the RNA strand of RNA-DNA heteroduplexes in a partially processive 3'- to 5'-endonucleasic mode. Neo-synthesized pregenomic RNA (pgRNA) are encapsidated together with the P protein, and reverse-transcribed inside the nucleocapsid. Initiation of reverse-transcription occurs first by binding the epsilon loop on the pgRNA genome, and is initiated by protein priming, thereby the 5'-end of (-)DNA is covalently linked to P protein. Partial (+)DNA is synthesized from the (-)DNA template and generates the relaxed circular DNA (RC-DNA) genome. After budding and infection, the RC-DNA migrates in the nucleus, and is converted into a plasmid-like covalently closed circular DNA (cccDNA). The activity of P protein does not seem to be necessary for cccDNA generation, and is presumably released from (+)DNA by host nuclear DNA repair machinery. In Arctic squirrel hepatitis virus (ASHV), this protein is Protein P.